A 491-amino-acid polypeptide reads, in one-letter code: Probable cytosol aminopeptidase (491 aa).

The Mn(2+) site is built by Lys-264 and Asp-269. Lys-276 is a catalytic residue. 3 residues coordinate Mn(2+): Asp-287, Asp-346, and Glu-348. Arg-350 is a catalytic residue.

It belongs to the peptidase M17 family. It depends on Mn(2+) as a cofactor.

The protein localises to the cytoplasm. It catalyses the reaction Release of an N-terminal amino acid, Xaa-|-Yaa-, in which Xaa is preferably Leu, but may be other amino acids including Pro although not Arg or Lys, and Yaa may be Pro. Amino acid amides and methyl esters are also readily hydrolyzed, but rates on arylamides are exceedingly low.. It carries out the reaction Release of an N-terminal amino acid, preferentially leucine, but not glutamic or aspartic acids.. In terms of biological role, presumably involved in the processing and regular turnover of intracellular proteins. Catalyzes the removal of unsubstituted N-terminal amino acids from various peptides. The sequence is that of Probable cytosol aminopeptidase from Xylella fastidiosa (strain M12).